Here is a 256-residue protein sequence, read N- to C-terminus: tRNA (guanine-N(7)-)-methyltransferase (256 aa).

Residues 1–15 show a composition bias toward polar residues; it reads MVATGGQAQDQSHNQ. Residues 1-22 form a disordered region; the sequence is MVATGGQAQDQSHNQEPGVLCP. Residues Gly-79, 102–103, 137–138, and Leu-157 contribute to the S-adenosyl-L-methionine site; these read EI and NA. Asp-160 is a catalytic residue. 235–237 lines the S-adenosyl-L-methionine pocket; it reads SEE.

The protein belongs to the class I-like SAM-binding methyltransferase superfamily. TrmB family.

Its subcellular location is the nucleus. It catalyses the reaction guanosine(46) in tRNA + S-adenosyl-L-methionine = N(7)-methylguanosine(46) in tRNA + S-adenosyl-L-homocysteine. The protein operates within tRNA modification; N(7)-methylguanine-tRNA biosynthesis. Its function is as follows. Catalyzes the formation of N(7)-methylguanine at position 46 (m7G46) in tRNA. This chain is tRNA (guanine-N(7)-)-methyltransferase, found in Drosophila yakuba (Fruit fly).